The following is a 134-amino-acid chain: Putative pre-16S rRNA nuclease (134 aa).

Belongs to the YqgF nuclease family.

It is found in the cytoplasm. In terms of biological role, could be a nuclease involved in processing of the 5'-end of pre-16S rRNA. The polypeptide is Putative pre-16S rRNA nuclease (Helicobacter pylori (strain J99 / ATCC 700824) (Campylobacter pylori J99)).